Here is an 88-residue protein sequence, read N- to C-terminus: Small ribosomal subunit protein bS20 (88 aa).

A disordered region spans residues 1 to 27 (MANIKSQIKRNKTNEKARLRNKAVKSS).

The protein belongs to the bacterial ribosomal protein bS20 family.

In terms of biological role, binds directly to 16S ribosomal RNA. The protein is Small ribosomal subunit protein bS20 of Streptomyces griseus subsp. griseus (strain JCM 4626 / CBS 651.72 / NBRC 13350 / KCC S-0626 / ISP 5235).